The sequence spans 432 residues: Adenylosuccinate lyase (432 aa).

N(6)-(1,2-dicarboxyethyl)-AMP is bound by residues 4 to 5, 67 to 69, and 93 to 94; these read RY, RHD, and TS. The active-site Proton donor/acceptor is the H141. Q212 is a N(6)-(1,2-dicarboxyethyl)-AMP binding site. The active-site Proton donor/acceptor is S262. Residues S263, 268 to 270, N276, and 307 to 311 each bind N(6)-(1,2-dicarboxyethyl)-AMP; these read KRN and SAERI.

Belongs to the lyase 1 family. Adenylosuccinate lyase subfamily. Homodimer and homotetramer. Residues from neighboring subunits contribute catalytic and substrate-binding residues to each active site.

It carries out the reaction N(6)-(1,2-dicarboxyethyl)-AMP = fumarate + AMP. The enzyme catalyses (2S)-2-[5-amino-1-(5-phospho-beta-D-ribosyl)imidazole-4-carboxamido]succinate = 5-amino-1-(5-phospho-beta-D-ribosyl)imidazole-4-carboxamide + fumarate. It participates in purine metabolism; AMP biosynthesis via de novo pathway; AMP from IMP: step 2/2. The protein operates within purine metabolism; IMP biosynthesis via de novo pathway; 5-amino-1-(5-phospho-D-ribosyl)imidazole-4-carboxamide from 5-amino-1-(5-phospho-D-ribosyl)imidazole-4-carboxylate: step 2/2. Catalyzes two reactions in de novo purine nucleotide biosynthesis. Catalyzes the breakdown of 5-aminoimidazole- (N-succinylocarboxamide) ribotide (SAICAR or 2-[5-amino-1-(5-phospho-beta-D-ribosyl)imidazole-4-carboxamido]succinate) to 5-aminoimidazole-4-carboxamide ribotide (AICAR or 5-amino-1-(5-phospho-beta-D-ribosyl)imidazole-4-carboxamide) and fumarate, and of adenylosuccinate (ADS or N(6)-(1,2-dicarboxyethyl)-AMP) to adenosine monophosphate (AMP) and fumarate. This is Adenylosuccinate lyase (purB) from Streptococcus mutans serotype c (strain ATCC 700610 / UA159).